The following is a 119-amino-acid chain: Beta-2-microglobulin (119 aa).

The N-terminal stretch at 1–20 (MARFVVVALLVLLSVSDLEA) is a signal peptide. The 90-residue stretch at 25–114 (PKIQVYSRYP…VTFLTPKTVK (90 aa)) folds into the Ig-like C1-type domain. An intrachain disulfide couples C45 to C100.

It belongs to the beta-2-microglobulin family. In terms of assembly, heterodimer of an alpha chain and a beta chain. Beta-2-microglobulin is the beta-chain of major histocompatibility complex class I molecules.

The protein localises to the secreted. Functionally, component of the class I major histocompatibility complex (MHC). Involved in the presentation of peptide antigens to the immune system. In Leontocebus fuscicollis (Brown-mantled tamarin), this protein is Beta-2-microglobulin (B2M).